The primary structure comprises 407 residues: Na(+)-translocating NADH-quinone reductase subunit F (407 aa).

A helical transmembrane segment spans residues Ile3–Phe23. Positions Gly32–Ile126 constitute a 2Fe-2S ferredoxin-type domain. [2Fe-2S] cluster-binding residues include Cys69, Cys75, Cys78, and Cys110. The FAD-binding FR-type domain occupies Val129–Lys269.

This sequence belongs to the NqrF family. Composed of six subunits; NqrA, NqrB, NqrC, NqrD, NqrE and NqrF. [2Fe-2S] cluster is required as a cofactor. FAD serves as cofactor.

It localises to the cell inner membrane. The catalysed reaction is a ubiquinone + n Na(+)(in) + NADH + H(+) = a ubiquinol + n Na(+)(out) + NAD(+). Its function is as follows. NQR complex catalyzes the reduction of ubiquinone-1 to ubiquinol by two successive reactions, coupled with the transport of Na(+) ions from the cytoplasm to the periplasm. The first step is catalyzed by NqrF, which accepts electrons from NADH and reduces ubiquinone-1 to ubisemiquinone by a one-electron transfer pathway. The sequence is that of Na(+)-translocating NADH-quinone reductase subunit F from Yersinia pseudotuberculosis serotype O:1b (strain IP 31758).